Consider the following 251-residue polypeptide: Octanoyltransferase (251 aa).

The region spanning 56–241 (ADTGDEIWVV…NLDGASAAAD (186 aa)) is the BPL/LPL catalytic domain. Substrate is bound by residues 96 to 103 (RGGQITYH), 168 to 170 (ALG), and 181 to 183 (GLS). Residue Cys199 is the Acyl-thioester intermediate of the active site.

Belongs to the LipB family.

The protein resides in the cytoplasm. It catalyses the reaction octanoyl-[ACP] + L-lysyl-[protein] = N(6)-octanoyl-L-lysyl-[protein] + holo-[ACP] + H(+). The protein operates within protein modification; protein lipoylation via endogenous pathway; protein N(6)-(lipoyl)lysine from octanoyl-[acyl-carrier-protein]: step 1/2. In terms of biological role, catalyzes the transfer of endogenously produced octanoic acid from octanoyl-acyl-carrier-protein onto the lipoyl domains of lipoate-dependent enzymes. Lipoyl-ACP can also act as a substrate although octanoyl-ACP is likely to be the physiological substrate. The chain is Octanoyltransferase from Burkholderia orbicola (strain AU 1054).